The following is an 83-amino-acid chain: Toxin To15 (83 aa).

The N-terminal stretch at 1–19 (MKGIILLISCLMLIEVVVG) is a signal peptide. The LCN-type CS-alpha/beta domain maps to 21 to 82 (KEGYPLDSSG…IWNAKTNKCY (62 aa)). 4 disulfide bridges follow: C31/C81, C35/C57, C43/C62, and C47/C64.

This sequence belongs to the long (4 C-C) scorpion toxin superfamily. Sodium channel inhibitor family. Beta subfamily. As to expression, expressed by the venom gland.

The protein resides in the secreted. Beta toxins bind voltage-independently at site-4 of sodium channels (Nav) and shift the voltage of activation toward more negative potentials thereby affecting sodium channel activation and promoting spontaneous and repetitive firing. This chain is Toxin To15, found in Tityus obscurus (Amazonian scorpion).